The primary structure comprises 92 residues: Conotoxin Im9.4 (92 aa).

The signal sequence occupies residues 1–20 (MHRSLAGSAVLMLLLLFALG). Positions 21–62 (NFVGVQPGLVTRDADNGQLMDNRRNLRLERKTMSLFKSLDKR) are excised as a propeptide. Cystine bridges form between C65–C79, C69–C81, and C75–C87. N90 carries the asparagine amide modification.

Belongs to the conotoxin P superfamily. In terms of tissue distribution, expressed by the venom duct.

It is found in the secreted. In terms of biological role, probable neurotoxin that inhibits ion channels. In Conus imperialis (Imperial cone), this protein is Conotoxin Im9.4.